The primary structure comprises 434 residues: Probable carboxypeptidase BDBG_01803 (434 aa).

Residues 1–20 (MKLSHLAAALSAQLVAPVAA) form the signal peptide. Asn-35, Asn-136, and Asn-150 each carry an N-linked (GlcNAc...) asparagine glycan. Asp-160 contributes to the Zn(2+) binding site. Glu-192 (proton acceptor) is an active-site residue. Zn(2+) is bound at residue Glu-193. Asn-343 is a glycosylation site (N-linked (GlcNAc...) asparagine).

This sequence belongs to the peptidase M20A family. It depends on Zn(2+) as a cofactor.

It localises to the secreted. In Blastomyces gilchristii (strain SLH14081) (Blastomyces dermatitidis), this protein is Probable carboxypeptidase BDBG_01803.